Consider the following 356-residue polypeptide: UDP-N-acetylglucosamine--N-acetylmuramyl-(pentapeptide) pyrophosphoryl-undecaprenol N-acetylglucosamine transferase (356 aa).

UDP-N-acetyl-alpha-D-glucosamine is bound by residues 12 to 14 (TGG), Asn124, Arg163, Ser188, Ile242, and Gln287.

This sequence belongs to the glycosyltransferase 28 family. MurG subfamily.

The protein resides in the cell inner membrane. It carries out the reaction di-trans,octa-cis-undecaprenyl diphospho-N-acetyl-alpha-D-muramoyl-L-alanyl-D-glutamyl-meso-2,6-diaminopimeloyl-D-alanyl-D-alanine + UDP-N-acetyl-alpha-D-glucosamine = di-trans,octa-cis-undecaprenyl diphospho-[N-acetyl-alpha-D-glucosaminyl-(1-&gt;4)]-N-acetyl-alpha-D-muramoyl-L-alanyl-D-glutamyl-meso-2,6-diaminopimeloyl-D-alanyl-D-alanine + UDP + H(+). Its pathway is cell wall biogenesis; peptidoglycan biosynthesis. Its function is as follows. Cell wall formation. Catalyzes the transfer of a GlcNAc subunit on undecaprenyl-pyrophosphoryl-MurNAc-pentapeptide (lipid intermediate I) to form undecaprenyl-pyrophosphoryl-MurNAc-(pentapeptide)GlcNAc (lipid intermediate II). This is UDP-N-acetylglucosamine--N-acetylmuramyl-(pentapeptide) pyrophosphoryl-undecaprenol N-acetylglucosamine transferase from Pseudomonas syringae pv. tomato (strain ATCC BAA-871 / DC3000).